Consider the following 431-residue polypeptide: Keratin, type I cytoskeletal 20 (431 aa).

Residues methionine 1–methionine 23 are disordered. A head region spans residues methionine 1–asparagine 76. Serine 13 bears the Phosphoserine; by MAPKAPK2, MAPKAPK3 and PKC mark. A phosphoserine mark is found at serine 16 and serine 26. A coil 1A region spans residues glycine 77–tryptophan 112. Residues glycine 77–threonine 388 form the IF rod domain. A linker 1 region spans residues tyrosine 113–glutamine 130. The coil 1B stretch occupies residues isoleucine 131–leucine 222. Residues arginine 223 to isoleucine 245 are linker 12. Positions methionine 246–glutamate 384 are coil 2. A tail region spans residues aspartate 385–valine 431.

The protein belongs to the intermediate filament family. Heterotetramer of two type I and two type II keratins. Associates with KRT8. Post-translationally, hyperphosphorylation at Ser-13 occurs during the early stages of apoptosis but becomes less prominent during the later stages. Phosphorylation at Ser-13 also increases in response to stress brought on by cell injury. Proteolytically cleaved by caspases during apoptosis. Cleavage occurs at Asp-235. Expressed at low levels in the more differentiated suprabasal regions of the small intestine, and at higher levels in the colon, mainly in the upper region and in scattered cells throughout the remaining epithelium. Also expressed in epithelial cells of bladder, ileum and stomach and at lower levels in pancreas and earskin. The phosphorylated form is nearly exclusively expressed in goblet cells of the small intestine and in the lumen-proximal cells of the colon (at protein level). Also expressed in jejunum and duodenum.

Its function is as follows. Plays a significant role in maintaining keratin filament organization in intestinal epithelia. When phosphorylated, plays a role in the secretion of mucin in the small intestine. The chain is Keratin, type I cytoskeletal 20 from Mus musculus (Mouse).